Consider the following 722-residue polypeptide: Threonine--tRNA ligase 1, cytoplasmic (722 aa).

The segment covering 1-10 has biased composition (polar residues); sequence MSQEKASSPS. The tract at residues 1 to 48 is disordered; that stretch reads MSQEKASSPSGKMDGEKPVDASEEKRKEGGKKKSKDGGGDGGRAELNP. Residues 13–27 are compositionally biased toward basic and acidic residues; that stretch reads MDGEKPVDASEEKRK. A TGS domain is found at 78–142; the sequence is DSKPIKVTLP…ETDCTLELLK (65 aa). Lys-242 is subject to N6-acetyllysine. Thr-245 bears the Phosphothreonine mark. Tyr-297 carries the post-translational modification Phosphotyrosine. The residue at position 452 (Thr-452) is a Phosphothreonine.

Belongs to the class-II aminoacyl-tRNA synthetase family. In terms of assembly, homodimer. In terms of processing, ISGylated.

The protein resides in the cytoplasm. It catalyses the reaction tRNA(Thr) + L-threonine + ATP = L-threonyl-tRNA(Thr) + AMP + diphosphate + H(+). In terms of biological role, catalyzes the attachment of threonine to tRNA(Thr) in a two-step reaction: threonine is first activated by ATP to form Thr-AMP and then transferred to the acceptor end of tRNA(Thr). Also edits incorrectly charged tRNA(Thr) via its editing domain, at the post-transfer stage. The polypeptide is Threonine--tRNA ligase 1, cytoplasmic (Tars1) (Mus musculus (Mouse)).